A 204-amino-acid polypeptide reads, in one-letter code: THO complex subunit 7 homolog (204 aa).

Gly2 carries the N-acetylglycine modification. Thr5 carries the post-translational modification Phosphothreonine. At Lys36 the chain carries N6-acetyllysine. Residues 50–137 form an interaction with THOC5 region; that stretch reads YQRMLSTLSQ…HHPDRHETLK (88 aa). Residues 105 to 204 form an interaction with NIF3L1 region; sequence QILQAKRIRK…ESTMEADPKP (100 aa). Positions 146 to 204 form a coiled coil; the sequence is LEHLSHIKESVEDKLELRRKQFHVLLSTIHELQQTLENDDKLSEVDEAQESTMEADPKP. The disordered stretch occupies residues 182 to 204; it reads ENDDKLSEVDEAQESTMEADPKP.

The protein belongs to the THOC7 family. In terms of assembly, tetramer; as part of a THO-DDX39B complex. Component of the THO subcomplex, which is composed of THOC1, THOC2, THOC3, THOC5, THOC6 and THOC7. Component of the transcription/export (TREX) complex at least composed of ALYREF/THOC4, DDX39B, SARNP/CIP29, CHTOP and the THO subcomplex; in the complex interacts with THOC1, THOC2 and THOC5; forms a coiled-coil dimer with THOC5; together with THOC5 and THOC6, plays a key structural role in the oligomerization of the THO-DDX39B complex. TREX seems to have a dynamic structure involving ATP-dependent remodeling. Interacts with NIF3L1. As to expression, ubiquitously expressed.

Its subcellular location is the cytoplasm. It is found in the nucleus. The protein resides in the nucleus speckle. In terms of biological role, component of the THO subcomplex of the TREX complex which is thought to couple mRNA transcription, processing and nuclear export, and which specifically associates with spliced mRNA and not with unspliced pre-mRNA. Required for efficient export of polyadenylated RNA. Plays a key structural role in the oligomerization of the THO-DDX39B complex. TREX is recruited to spliced mRNAs by a transcription-independent mechanism, binds to mRNA upstream of the exon-junction complex (EJC) and is recruited in a splicing- and cap-dependent manner to a region near the 5' end of the mRNA where it functions in mRNA export to the cytoplasm via the TAP/NXF1 pathway. The chain is THO complex subunit 7 homolog (Thoc7) from Mus musculus (Mouse).